A 266-amino-acid chain; its full sequence is Carboxy-S-adenosyl-L-methionine synthase (266 aa).

The disordered stretch occupies residues 1–24; it reads MPKRETQSLHDTQQQPGPTAPQRD. S-adenosyl-L-methionine is bound by residues Y58, 83–85, 108–109, 136–137, N151, and R218; these read GCS, DN, and DI.

It belongs to the class I-like SAM-binding methyltransferase superfamily. Cx-SAM synthase family. In terms of assembly, homodimer.

The catalysed reaction is prephenate + S-adenosyl-L-methionine = carboxy-S-adenosyl-L-methionine + 3-phenylpyruvate + H2O. Catalyzes the conversion of S-adenosyl-L-methionine (SAM) to carboxy-S-adenosyl-L-methionine (Cx-SAM). In Yersinia enterocolitica serotype O:8 / biotype 1B (strain NCTC 13174 / 8081), this protein is Carboxy-S-adenosyl-L-methionine synthase.